Here is a 330-residue protein sequence, read N- to C-terminus: BTB/POZ domain-containing adapter for CUL3-mediated RhoA degradation protein 1 (330 aa).

The interval 1–34 (MSAEASGSSGGHAVTVSGSSPSSSSHVGEEKPGR) is disordered. The 69-residue stretch at 40–108 (KYVKLNVGGT…LRDGTVPLPD (69 aa)) folds into the BTB domain. Residues 282–291 (GGVSSSGAGQ) show a composition bias toward low complexity. The interval 282 to 304 (GGVSSSGAGQSEEEGAGAGGGDR) is disordered.

Belongs to the BACURD family.

The protein resides in the nucleus. In terms of biological role, substrate-specific adapter of a BCR (BTB-CUL3-RBX1) E3 ubiquitin-protein ligase complex required for synaptic transmission. The BCR(KCTD13) E3 ubiquitin ligase complex mediates the ubiquitination of RHOA, leading to its degradation by the proteasome, thereby regulating the actin cytoskeleton and promoting synaptic transmission. In Danio rerio (Zebrafish), this protein is BTB/POZ domain-containing adapter for CUL3-mediated RhoA degradation protein 1.